The primary structure comprises 322 residues: MAPALTQSLNGATPQVKAALHHLDANTVSIDDIIHYLKHHGGVVVQNLISEEILQEVGADIKPYFDALVEPGFFSSKTRIVTRLPNKSIAFVEKIFGNQVFQDICDHFLTSHHRGWYGNEQYTYSPHPVFNSALAFSTLPGNETQSLHRECMGQHNKLPAIAPEDYPIGRDTVLGMFVADTRTTRENGATRFIPGSHLQSTLDPPDESQTVPVEMNRGDVFLMLGSCYHGASANVSQAEERILYSTFMTQSTRRQLTTCLFLVQEENIYLSVPVDRVRVFSPRMQKRLGFSASDPLFGWVDVKDPRKVFNLPGLSEGQHIDV.

Residues H148 and H229 each coordinate Fe cation.

Belongs to the PhyH family. In terms of assembly, homodimer. It depends on Fe cation as a cofactor.

The protein operates within secondary metabolite biosynthesis. In terms of biological role, polyketide synthase-nonribosomal peptide synthetase; part of the him gene cluster that mediates the biosynthesis of himeic acid A, a ubiquitin-activating enzyme (E1) inhibitor. First, himA, together with the trans-enoyl reductase himH, catalyzes the formation of apolyketide chain, which is then condensed with leucine by the NRPS activity of himA. Dieckmann cyclization and release from himA gives a tetramic acid intermediate as the product of himA PKS-NRPS. HimG then catalyzes alpha-oxidation of the tetramic acid ring, with a subsequent rearrangement to yield apyrone intermediate. Two terminal methyl groups of polyketide and amide side chains are oxidized to carboxylic acids by himC cytochrome P450 monooxygenase to form himeic acid A. Himeic acid A is further converted to himeic acid B and C during culture growth. No gene responsible for pyrone to pyridone conversion was found in the him gene cluster and himeic acid A is non-enzymatically converted to himeic acid C by the incorporation of an ammonium nitrogen atom in a pH5 buffer, and to himeic acid B at a conversion ratio of 50% during incubation in MeOH for 5 days. This Aspergillus japonicus protein is Dioxygenase himG.